The following is a 343-amino-acid chain: Phosphoribosylformylglycinamidine cyclo-ligase (343 aa).

Belongs to the AIR synthase family.

Its subcellular location is the cytoplasm. It catalyses the reaction 2-formamido-N(1)-(5-O-phospho-beta-D-ribosyl)acetamidine + ATP = 5-amino-1-(5-phospho-beta-D-ribosyl)imidazole + ADP + phosphate + H(+). It participates in purine metabolism; IMP biosynthesis via de novo pathway; 5-amino-1-(5-phospho-D-ribosyl)imidazole from N(2)-formyl-N(1)-(5-phospho-D-ribosyl)glycinamide: step 2/2. This is Phosphoribosylformylglycinamidine cyclo-ligase from Parasynechococcus marenigrum (strain WH8102).